The chain runs to 256 residues: Enkurin (256 aa).

The short motif at 83-89 (PKKPAVP) is the SH3-binding element. One can recognise an Enkurin domain in the interval 160-252 (KRNEEIKKAQ…IIEKHKIIYI (93 aa)). Residues 160–255 (KRNEEIKKAQ…KHKIIYIANN (96 aa)) form an interaction with TRPC proteins region. The region spanning 176–187 (IQENLKKAAMKR) is the IQ domain.

In terms of assembly, microtubule inner protein component of sperm flagellar doublet microtubules. Binds calmodulin via its IQ domain. Interacts with TRPC1, TRPC2, TRPC5, but not TRPC3. Interacts with CFAP45. In terms of tissue distribution, expressed in airway epithelial cells.

The protein localises to the cytoplasm. The protein resides in the cytoskeleton. It is found in the cilium axoneme. Its subcellular location is the flagellum axoneme. In terms of biological role, adapter that functions to localize a calcium-sensitive signal transduction machinery in sperm to a calcium-permeable ion channel. Microtubule inner protein (MIP) part of the dynein-decorated doublet microtubules (DMTs) in cilia axoneme, which is required for motile cilia beating. The protein is Enkurin of Homo sapiens (Human).